Consider the following 223-residue polypeptide: Nitrate reductase gamma chain (223 aa).

A helical membrane pass occupies residues 2–27 (SGQILWGIMPYIVLTIFIGGHIYRYQ). Residues 28-45 (HDQFGWTAKSSELLEKKK) are Cytoplasmic-facing. The chain crosses the membrane as a helical span at residues 46–68 (LAAGSTLFHWGLLCVVGGHVMGI). Residues His54 and His64 each contribute to the heme b site. The Extracellular portion of the chain corresponds to 69-81 (LIPEGVYASLGIS). The chain crosses the membrane as a helical span at residues 82–111 (EHMYHKMAIGAGLPAGIAACTGLVILTYRR). The Cytoplasmic portion of the chain corresponds to 112–123 (LFDKRIRKTSSP). Residues 124–147 (SDILTLLLLLFMMLSGVAATFLNI) traverse the membrane as a helical segment. The Extracellular portion of the chain corresponds to 148-180 (DSKGFDYRTTVGPWFREIVLFRPDASLMESVPL). A helical membrane pass occupies residues 181-196 (WFKFHIVIGYVVFILW). Heme b contacts are provided by His185 and His203. Topologically, residues 197-223 (PFTRLVHVFSLPLKYLTRSYVVYRKRS) are cytoplasmic.

It depends on heme as a cofactor.

The protein localises to the cell membrane. It carries out the reaction nitrate + a quinol = a quinone + nitrite + H2O. In terms of biological role, the gamma chain is a membrane-embedded heme-iron unit resembling cytochrome b, which transfers electrons from quinones to the beta subunit. This chain is Nitrate reductase gamma chain (narI), found in Bacillus subtilis (strain 168).